Consider the following 975-residue polypeptide: Exocyst complex component 4 (975 aa).

Residue Ala2 is modified to N-acetylalanine. Lys9 carries the post-translational modification N6-acetyllysine. A Phosphoserine modification is found at Ser32. Residues 32–114 are a coiled coil; sequence STSDDVEDRE…HCKRDELRKL (83 aa). Basic and acidic residues predominate over residues 211–224; the sequence is RNKEKGKMSSHGKD. Residues 211 to 230 are disordered; that stretch reads RNKEKGKMSSHGKDPSPGPL. A Phosphoserine modification is found at Ser226. Thr238 bears the Phosphothreonine mark. Ser469 bears the Phosphoserine mark.

Belongs to the SEC8 family. As to quaternary structure, the exocyst complex is composed of EXOC1, EXOC2, EXOC3, EXOC4, EXOC5, EXOC6, EXOC7 and EXOC8. Interacts with BIRC6/bruce. Interacts with MYRIP. Interacts with SH3BP1; required for the localization of both SH3BP1 and the exocyst to the leading edge of migrating cells. Interacts with SLC6A9. In terms of tissue distribution, expressed in the striatum (at protein level).

Its subcellular location is the midbody. The protein resides in the midbody ring. The protein localises to the cell projection. It localises to the cytoplasm. It is found in the cytoskeleton. Its subcellular location is the microtubule organizing center. The protein resides in the centrosome. Functionally, component of the exocyst complex involved in the docking of exocytic vesicles with fusion sites on the plasma membrane. The protein is Exocyst complex component 4 (Exoc4) of Mus musculus (Mouse).